Consider the following 263-residue polypeptide: CRISPR-associated protein Cas5 2 (263 aa).

The protein belongs to the CRISPR-associated protein Cas5 family. Subtype I-A/Apern subfamily. Part of the aCascade ribonucleoprotein complex, minimally composed of Csa2 and Cas5a, which binds crRNA. Other possible components of aCascade in strain P1 are Cas6b (SSO1437) and Csa5 (SSO1443), while SSO1399, Cas5b (SSO1400) and SSO1401 have sometimes been seen weakly associated. Csa2 is probably the major RNA-binding subunit. The Csa2-Cas5a-crRNA complex also binds target DNA homologous to crRNA, probably forming an R-loop. Purified aCascade forms a filament about 6 nm in width.

Its function is as follows. CRISPR (clustered regularly interspaced short palindromic repeat) is an adaptive immune system that provides protection against mobile genetic elements (viruses, transposable elements and conjugative plasmids). CRISPR clusters contain spacers, sequences complementary to antecedent mobile elements, and target invading nucleic acids. CRISPR clusters are transcribed and processed into CRISPR RNA (crRNA). This Saccharolobus solfataricus (strain ATCC 35092 / DSM 1617 / JCM 11322 / P2) (Sulfolobus solfataricus) protein is CRISPR-associated protein Cas5 2 (cas5b).